The sequence spans 356 residues: Butyrate kinase (356 aa).

It belongs to the acetokinase family.

It is found in the cytoplasm. It carries out the reaction butanoate + ATP = butanoyl phosphate + ADP. It functions in the pathway lipid metabolism; butanoate metabolism. In terms of biological role, catalyzes the conversion of butyryl-CoA through butyryl phosphate to butyrate. The chain is Butyrate kinase (buk) from Clostridium perfringens (strain 13 / Type A).